We begin with the raw amino-acid sequence, 248 residues long: 2,3-bisphosphoglycerate-dependent phosphoglycerate mutase (248 aa).

Substrate contacts are provided by residues 8–15 (RHGESTWN), 21–22 (TG), Arg60, 87–90 (EKHY), Lys98, 114–115 (RR), and 183–184 (GN). His9 (tele-phosphohistidine intermediate) is an active-site residue. Glu87 acts as the Proton donor/acceptor in catalysis.

It belongs to the phosphoglycerate mutase family. BPG-dependent PGAM subfamily.

The catalysed reaction is (2R)-2-phosphoglycerate = (2R)-3-phosphoglycerate. It participates in carbohydrate degradation; glycolysis; pyruvate from D-glyceraldehyde 3-phosphate: step 3/5. In terms of biological role, catalyzes the interconversion of 2-phosphoglycerate and 3-phosphoglycerate. In Elusimicrobium minutum (strain Pei191), this protein is 2,3-bisphosphoglycerate-dependent phosphoglycerate mutase.